A 330-amino-acid polypeptide reads, in one-letter code: Malate dehydrogenase (330 aa).

13-19 contributes to the NAD(+) binding site; it reads GAAGQIG. Arginine 94 and arginine 100 together coordinate substrate. Residues asparagine 107, glutamine 114, and 131 to 133 contribute to the NAD(+) site; that span reads VGN. 2 residues coordinate substrate: asparagine 133 and arginine 164. The active-site Proton acceptor is histidine 189.

Belongs to the LDH/MDH superfamily. MDH type 2 family.

The enzyme catalyses (S)-malate + NAD(+) = oxaloacetate + NADH + H(+). Its function is as follows. Catalyzes the reversible oxidation of malate to oxaloacetate. The protein is Malate dehydrogenase of Deinococcus deserti (strain DSM 17065 / CIP 109153 / LMG 22923 / VCD115).